Here is a 180-residue protein sequence, read N- to C-terminus: Dual-action ribosomal maturation protein DarP (180 aa).

Basic and acidic residues predominate over residues 1–13 (MKPDKTENTEHGI). A disordered region spans residues 1-21 (MKPDKTENTEHGIEPVSKTKR).

Belongs to the DarP family.

The protein resides in the cytoplasm. Its function is as follows. Member of a network of 50S ribosomal subunit biogenesis factors which assembles along the 30S-50S interface, preventing incorrect 23S rRNA structures from forming. Promotes peptidyl transferase center (PTC) maturation. This Methylobacillus flagellatus (strain ATCC 51484 / DSM 6875 / VKM B-1610 / KT) protein is Dual-action ribosomal maturation protein DarP.